The primary structure comprises 174 residues: Probable E3 ubiquitin-protein ligase RHA4A (174 aa).

The segment at 105–147 adopts an RING-type; atypical zinc-finger fold; the sequence is CCVCLGEFELKEELVEMPLCKHIFHLDCIHLWLYSHNTCPLCR. The interval 155–174 is disordered; that stretch reads TKTSVDDDNDHPDSPQTSPV.

Expressed in stems, flowers, cauline leaves and roots.

It carries out the reaction S-ubiquitinyl-[E2 ubiquitin-conjugating enzyme]-L-cysteine + [acceptor protein]-L-lysine = [E2 ubiquitin-conjugating enzyme]-L-cysteine + N(6)-ubiquitinyl-[acceptor protein]-L-lysine.. It functions in the pathway protein modification; protein ubiquitination. Probable E3 ubiquitin-protein ligase that may possess E3 ubiquitin ligase activity in vitro. The chain is Probable E3 ubiquitin-protein ligase RHA4A from Arabidopsis thaliana (Mouse-ear cress).